Reading from the N-terminus, the 540-residue chain is Putative BTB/POZ domain-containing protein R224 (540 aa).

In terms of domain architecture, BTB spans 16–88 (TDLELTLIDE…FYKNPIKYKN (73 aa)). The chain crosses the membrane as a helical span at residues 356–376 (IFVSLLNDIIFVLSSINMYFI).

It belongs to the mimivirus BTB/WD family.

It is found in the membrane. This is Putative BTB/POZ domain-containing protein R224 from Acanthamoeba polyphaga (Amoeba).